Here is a 161-residue protein sequence, read N- to C-terminus: Probable ubiquitin-conjugating enzyme E2 17 (161 aa).

The UBC core domain occupies 15–161 (IATNRLQKEF…TRWRFHDDKV (147 aa)). Cys99 serves as the catalytic Glycyl thioester intermediate.

This sequence belongs to the ubiquitin-conjugating enzyme family.

It carries out the reaction S-ubiquitinyl-[E1 ubiquitin-activating enzyme]-L-cysteine + [E2 ubiquitin-conjugating enzyme]-L-cysteine = [E1 ubiquitin-activating enzyme]-L-cysteine + S-ubiquitinyl-[E2 ubiquitin-conjugating enzyme]-L-cysteine.. It functions in the pathway protein modification; protein ubiquitination. In terms of biological role, accepts the ubiquitin from the E1 complex and catalyzes its covalent attachment to other proteins. This chain is Probable ubiquitin-conjugating enzyme E2 17 (UBC17), found in Arabidopsis thaliana (Mouse-ear cress).